We begin with the raw amino-acid sequence, 1067 residues long: Lon protease homolog, mitochondrial (1067 aa).

The N-terminal 36 residues, 1 to 36 (MITRLSGACLRRSGAKRNWPREHLVHRSLLASFSTT), are a transit peptide targeting the mitochondrion. A compositionally biased stretch (basic and acidic residues) spans 55–82 (KSKEPKDNKPLDNKNDPKKTHNEDESHT). 2 disordered regions span residues 55–142 (KSKE…MPLN) and 262–314 (IPPK…ESTP). Over residues 128–139 (FELGGEENEDEM) the composition is skewed to acidic residues. The 264-residue stretch at 162 to 425 (LLALPIARRP…KALYVLKKEL (264 aa)) folds into the Lon N-terminal domain. Over residues 293-311 (VKSDLKQDNGKEEPEKEVE) the composition is skewed to basic and acidic residues. 578 to 585 (GPPGVGKT) serves as a coordination point for ATP. A disordered region spans residues 791–820 (NSKEKSTGKSGKKTSPQSSEDAANKEASSV). The Lon proteolytic domain occupies 854–1040 (TTPPGVVMGL…DDVFKRVFSN (187 aa)). Catalysis depends on residues Ser946 and Lys989.

It belongs to the peptidase S16 family. Homohexamer or homoheptamer. Organized in a ring with a central cavity.

The protein localises to the mitochondrion matrix. It carries out the reaction Hydrolysis of proteins in presence of ATP.. In terms of biological role, ATP-dependent serine protease that mediates the selective degradation of misfolded, unassembled or oxidatively damaged polypeptides as well as certain short-lived regulatory proteins in the mitochondrial matrix. May also have a chaperone function in the assembly of inner membrane protein complexes. Participates in the regulation of mitochondrial gene expression and in the maintenance of the integrity of the mitochondrial genome. Binds to mitochondrial DNA in a site-specific manner. The polypeptide is Lon protease homolog, mitochondrial (pim1) (Schizosaccharomyces pombe (strain 972 / ATCC 24843) (Fission yeast)).